Reading from the N-terminus, the 321-residue chain is Lactamase-like protein notP (321 aa).

Zn(2+) is bound by residues histidine 108, histidine 110, aspartate 112, and histidine 113. The Proton donor/acceptor role is filled by aspartate 112.

It belongs to the metallo-beta-lactamase superfamily. The cofactor is Zn(2+).

Lactamase-like protein; part of the gene cluster that mediates the biosynthesis of notoamide, a fungal indole alkaloid that belongs to a family of natural products containing a characteristic bicyclo[2.2.2]diazaoctane core. The first step of notoamide biosynthesis involves coupling of L-proline and L-tryptophan by the bimodular NRPS notE, to produce cyclo-L-tryptophan-L-proline called brevianamide F. The reverse prenyltransferase notF then acts as a deoxybrevianamide E synthase and converts brevianamide F to deoxybrevianamide E via reverse prenylation at C-2 of the indole ring leading to the bicyclo[2.2.2]diazaoctane core. Deoxybrevianamide E is further hydroxylated at C-6 of the indole ring, likely catalyzed by the cytochrome P450 monooxygenase notG, to yield 6-hydroxy-deoxybrevianamide E. 6-hydroxy-deoxybrevianamide E is a specific substrate of the prenyltransferase notC for normal prenylation at C-7 to produce 6-hydroxy-7-prenyl-deoxybrevianamide, also called notoamide S. As the proposed pivotal branching point in notoamide biosynthesis, notoamide S can be diverted to notoamide E through an oxidative pyran ring closure putatively catalyzed by either notH cytochrome P450 monooxygenase or the notD FAD-linked oxidoreductase. This step would be followed by an indole 2,3-epoxidation-initiated pinacol-like rearrangement catalyzed by the notB FAD-dependent monooxygenase leading to the formation of notoamide C and notoamide D. On the other hand notoamide S is converted to notoamide T by notH (or notD), a bifunctional oxidase that also functions as the intramolecular Diels-Alderase responsible for generation of (+)-notoamide T. To generate antipodal (-)-notoaminide T, notH' (or notD') in Aspergillus versicolor is expected to catalyze a Diels-Alder reaction leading to the opposite stereochemistry. The remaining oxidoreductase notD (or notH) likely catalyzes the oxidative pyran ring formation to yield (+)-stephacidin A. The FAD-dependent monooxygenase notI is highly similar to notB and is predicted to catalyze a similar conversion from (+)-stephacidin A to (-)-notoamide B via the 2,3-epoxidation of (+)-stephacidin A followed by a pinacol-type rearrangement. Finally, it remains unclear which enzyme could be responsible for the final hydroxylation steps leading to notoamide A and sclerotiamide. The function of notP in the notoamide biosynthesis has not been determined yet. The protein is Lactamase-like protein notP of Aspergillus sp. (strain MF297-2).